Reading from the N-terminus, the 625-residue chain is Mitochondrial Rho GTPase 1 (625 aa).

Over 1-601 (MSDDETLADV…LRRVFYLNDS (601 aa)) the chain is Cytoplasmic. Residues 3-170 (DDETLADVRI…EIFYYAQKAV (168 aa)) enclose the Miro 1 domain. Residues 16 to 23 (GDEGCGKT), 62 to 66 (DLSIK), and 123 to 126 (NKSD) contribute to the GTP site. EF-hand domains follow at residues 188–223 (RARKALIRVFKICDRDNDGYLSDTELNDFQKLCFGI) and 308–343 (EGVQFVSALFEKYDEDKDGCLSPSELQNLFSVCPVP). The Ca(2+) site is built by aspartate 201, aspartate 203, aspartate 205, tyrosine 207, glutamate 212, aspartate 321, aspartate 323, aspartate 325, cysteine 327, and glutamate 332. The 206-residue stretch at 420–625 (HGTDRKVFQC…LAGFLVLKNL (206 aa)) folds into the Miro 2 domain. GTP contacts are provided by residues 433–440 (GAKDAGKT), 470–474 (RVKEE), and 537–540 (TKVE). A helical; Anchor for type IV membrane protein membrane pass occupies residues 602–622 (NLLSKITFGAAIVALAGFLVL). At 623 to 625 (KNL) the chain is on the mitochondrial intermembrane side.

The protein belongs to the mitochondrial Rho GTPase family.

Its subcellular location is the mitochondrion outer membrane. Mitochondrial GTPase involved in mitochondrial trafficking. Probably involved in control of anterograde transport of mitochondria and their subcellular distribution. Plays a role in maintaining mitochondrial morphology. The protein is Mitochondrial Rho GTPase 1 of Caenorhabditis elegans.